We begin with the raw amino-acid sequence, 142 residues long: Large ribosomal subunit protein bL21 (142 aa).

A compositionally biased stretch (basic residues) spans 74-84 (RRRQNSKRTRG). Residues 74-142 (RRRQNSKRTR…KAATKAESAE (69 aa)) are disordered. A compositionally biased stretch (basic and acidic residues) spans 107–125 (KAAEKKAPKADAAEGEAAK). The segment covering 126–135 (PKKAAPKKAA) has biased composition (basic residues).

It belongs to the bacterial ribosomal protein bL21 family. As to quaternary structure, part of the 50S ribosomal subunit. Contacts protein L20.

Functionally, this protein binds to 23S rRNA in the presence of protein L20. The sequence is that of Large ribosomal subunit protein bL21 from Brucella abortus (strain S19).